The following is a 739-amino-acid chain: Phosphoribosylformylglycinamidine synthase subunit PurL (739 aa).

The active site involves histidine 54. ATP-binding residues include tyrosine 57 and lysine 96. A Mg(2+)-binding site is contributed by glutamate 98. Substrate contacts are provided by residues 99–102 (SHNH) and arginine 121. The Proton acceptor role is filled by histidine 100. Aspartate 122 contacts Mg(2+). Glutamine 245 is a substrate binding site. Residue aspartate 273 participates in Mg(2+) binding. 317 to 319 (ESQ) provides a ligand contact to substrate. Residues aspartate 500 and glycine 537 each coordinate ATP. Position 538 (asparagine 538) interacts with Mg(2+). Serine 540 is a binding site for substrate.

The protein belongs to the FGAMS family. In terms of assembly, monomer. Part of the FGAM synthase complex composed of 1 PurL, 1 PurQ and 2 PurS subunits.

It localises to the cytoplasm. The catalysed reaction is N(2)-formyl-N(1)-(5-phospho-beta-D-ribosyl)glycinamide + L-glutamine + ATP + H2O = 2-formamido-N(1)-(5-O-phospho-beta-D-ribosyl)acetamidine + L-glutamate + ADP + phosphate + H(+). Its pathway is purine metabolism; IMP biosynthesis via de novo pathway; 5-amino-1-(5-phospho-D-ribosyl)imidazole from N(2)-formyl-N(1)-(5-phospho-D-ribosyl)glycinamide: step 1/2. In terms of biological role, part of the phosphoribosylformylglycinamidine synthase complex involved in the purines biosynthetic pathway. Catalyzes the ATP-dependent conversion of formylglycinamide ribonucleotide (FGAR) and glutamine to yield formylglycinamidine ribonucleotide (FGAM) and glutamate. The FGAM synthase complex is composed of three subunits. PurQ produces an ammonia molecule by converting glutamine to glutamate. PurL transfers the ammonia molecule to FGAR to form FGAM in an ATP-dependent manner. PurS interacts with PurQ and PurL and is thought to assist in the transfer of the ammonia molecule from PurQ to PurL. In Bacillus cereus (strain B4264), this protein is Phosphoribosylformylglycinamidine synthase subunit PurL.